The sequence spans 101 residues: Small ribosomal subunit protein uS14 (101 aa).

It belongs to the universal ribosomal protein uS14 family. As to quaternary structure, part of the 30S ribosomal subunit. Contacts proteins S3 and S10.

Its function is as follows. Binds 16S rRNA, required for the assembly of 30S particles and may also be responsible for determining the conformation of the 16S rRNA at the A site. This Buchnera aphidicola subsp. Baizongia pistaciae (strain Bp) protein is Small ribosomal subunit protein uS14.